A 92-amino-acid chain; its full sequence is Elongation factor 1-beta (92 aa).

This sequence belongs to the EF-1-beta/EF-1-delta family.

In terms of biological role, promotes the exchange of GDP for GTP in EF-1-alpha/GDP, thus allowing the regeneration of EF-1-alpha/GTP that could then be used to form the ternary complex EF-1-alpha/GTP/AAtRNA. The sequence is that of Elongation factor 1-beta from Pyrobaculum calidifontis (strain DSM 21063 / JCM 11548 / VA1).